Reading from the N-terminus, the 311-residue chain is T-cell immunomodulatory protein (311 aa).

N-linked (GlcNAc...) asparagine glycosylation is found at N52, N70, and N181. A helical membrane pass occupies residues 266-286 (VLLTAIALIGVCVFILAIIGI).

Belongs to the TIP family. In terms of assembly, interacts with RUVBL1, RUVBL2 and alpha-tubulin.

Its subcellular location is the secreted. The protein localises to the cell membrane. In terms of biological role, modulator of T-cell function. Has a protective effect in graft versus host disease model. This chain is T-cell immunomodulatory protein, found in Macaca fascicularis (Crab-eating macaque).